The chain runs to 213 residues: Sclerostin (213 aa).

The N-terminal stretch at 1-28 is a signal peptide; sequence MQLSLAPCLACLLVHAAFVAVESQGWQA. A glycan (N-linked (GlcNAc...) asparagine) is linked at Asn53. 4 disulfide bridges follow: Cys80-Cys134, Cys94-Cys148, Cys105-Cys165, and Cys109-Cys167. One can recognise a CTCK domain in the interval 82 to 172; the sequence is ELHYTRFVTD…ASCKCKRLTR (91 aa). Asn175 is a glycosylation site (N-linked (GlcNAc...) asparagine). Residues 178–213 are disordered; the sequence is ELKDFGPETARPQKGRKPRPRARGAKANQAELENAY. The segment covering 190–201 has biased composition (basic residues); the sequence is QKGRKPRPRARG.

This sequence belongs to the sclerostin family. Interacts with LRP4 (via the extracellular domain); the interaction facilitates the inhibition of Wnt signaling. Interacts with LRP5 (via the first two YWTD-EGF repeat domains); the interaction inhibits Wnt-mediated signaling. Interacts with LRP6.

It is found in the secreted. Negative regulator of bone growth that acts through inhibition of Wnt signaling and bone formation. This is Sclerostin from Rattus norvegicus (Rat).